Here is a 59-residue protein sequence, read N- to C-terminus: Antitoxin RelB4 (59 aa).

Residues valine 38 to lysine 59 are disordered. The span at glutamine 50 to lysine 59 shows a compositional bias: pro residues.

In terms of biological role, antitoxin component of a type II toxin-antitoxin (TA) system. Neutralizes the effect of cognate toxin RelE4, but no other RelE or ParE toxin. This chain is Antitoxin RelB4 (relB4), found in Caulobacter vibrioides (strain ATCC 19089 / CIP 103742 / CB 15) (Caulobacter crescentus).